The primary structure comprises 347 residues: NADH-ubiquinone oxidoreductase chain 2 (347 aa).

The next 11 membrane-spanning stretches (helical) occupy residues 3-23 (PPIL…VLTS), 25-45 (HWML…PILM), 59-79 (YFLM…INLL), 96-116 (TLMT…FWVP), 122-142 (ISLS…LSVL), 153-173 (LLLL…LNQT), 178-198 (ILAY…IYNP), 200-220 (MMLL…MLFM), 237-257 (MPLI…LPPL), 274-294 (EMII…YFYM), and 325-345 (FLPP…IISI).

It belongs to the complex I subunit 2 family. As to quaternary structure, core subunit of respiratory chain NADH dehydrogenase (Complex I) which is composed of 45 different subunits. Interacts with TMEM242.

The protein resides in the mitochondrion inner membrane. It carries out the reaction a ubiquinone + NADH + 5 H(+)(in) = a ubiquinol + NAD(+) + 4 H(+)(out). Core subunit of the mitochondrial membrane respiratory chain NADH dehydrogenase (Complex I) which catalyzes electron transfer from NADH through the respiratory chain, using ubiquinone as an electron acceptor. Essential for the catalytic activity and assembly of complex I. The sequence is that of NADH-ubiquinone oxidoreductase chain 2 from Paradoxurus hermaphroditus (Asian palm civet).